Here is a 188-residue protein sequence, read N- to C-terminus: uncharacterized protein (188 aa).

Residues Met1–Glu15 are compositionally biased toward basic and acidic residues. Residues Met1–Val21 are disordered.

This is an uncharacterized protein from Saccharolobus islandicus (Sulfolobus islandicus).